A 125-amino-acid polypeptide reads, in one-letter code: Protein ApaG (125 aa).

The region spanning 1 to 125 (MFTSSKVAIQ…FRLAIPTLIN (125 aa)) is the ApaG domain.

In Proteus mirabilis (strain HI4320), this protein is Protein ApaG.